The primary structure comprises 500 residues: Potassium voltage-gated channel subfamily V member 1 (500 aa).

At 1-210 the chain is on the cytoplasmic side; sequence MPSSGRALLD…EKPGSSTAAR (210 aa). Positions 168 to 181 are enriched in basic and acidic residues; it reads KKDTEDQESQHESE. A disordered region spans residues 168–189; it reads KKDTEDQESQHESEQDFSQGPC. The helical transmembrane segment at 211 to 231 threads the bilayer; sequence IFGVISIIFVVVSIINMALMS. The Extracellular portion of the chain corresponds to 232 to 238; that stretch reads AELSWLD. Residues 239–259 traverse the membrane as a helical segment; that stretch reads LQLLEILEYVCISWFTGEFVL. Topologically, residues 260–276 are cytoplasmic; sequence RFLCVRDRCRFLRKVPN. The helical transmembrane segment at 277 to 297 threads the bilayer; the sequence is IIDLLAILPFYITLLVESLSG. Over 298 to 309 the chain is Extracellular; sequence SQTTQELENVGR. Residues 310–331 form a helical; Voltage-sensor membrane-spanning segment; sequence IVQVLRLLRALRMLKLGRHSTG. Over 332–345 the chain is Cytoplasmic; the sequence is LRSLGMTITQCYEE. A helical membrane pass occupies residues 346–366; sequence VGLLLLFLSVGISIFSTVEYF. A Selectivity filter motif is present at residues 392 to 397; it reads TVGYGD. Residues 407 to 427 traverse the membrane as a helical segment; sequence IVAFMCILSGILVLALPIAII. Over 428-500 the chain is Cytoplasmic; sequence NDRFSACYFT…RSSGGDDFWF (73 aa).

Belongs to the potassium channel family. V (TC 1.A.1.2) subfamily. Kv8.1/KCNV1 sub-subfamily. In terms of assembly, heteromultimer with KCNB1 and KCNB2. Interacts with KCNC4 and KCND1. Detected in brain.

It is found in the cell membrane. In terms of biological role, potassium channel subunit that does not form functional channels by itself. Modulates KCNB1 and KCNB2 channel activity by shifting the threshold for inactivation to more negative values and by slowing the rate of inactivation. Can down-regulate the channel activity of KCNB1, KCNB2, KCNC4 and KCND1, possibly by trapping them in intracellular membranes. This chain is Potassium voltage-gated channel subfamily V member 1 (KCNV1), found in Homo sapiens (Human).